The following is a 1053-amino-acid chain: Probable sucrose-phosphate synthase (1053 aa).

Over residues 103–115 the composition is skewed to basic and acidic residues; it reads RRQERERGRREAV. Disordered stretches follow at residues 103–127 and 673–693; these read RRQE…EGEK and LRSI…DSLR.

Belongs to the glycosyltransferase 1 family. As to quaternary structure, homodimer or homotetramer.

It catalyses the reaction beta-D-fructose 6-phosphate + UDP-alpha-D-glucose = sucrose 6(F)-phosphate + UDP + H(+). Its pathway is glycan biosynthesis; sucrose biosynthesis; sucrose from D-fructose 6-phosphate and UDP-alpha-D-glucose: step 1/2. Activity is regulated by phosphorylation and moderated by concentration of metabolites and light. In terms of biological role, plays a role in photosynthetic sucrose synthesis by catalyzing the rate-limiting step of sucrose biosynthesis from UDP-glucose and fructose- 6-phosphate. Involved in the regulation of carbon partitioning in the leaves of plants. May regulate the synthesis of sucrose and therefore play a major role as a limiting factor in the export of photoassimilates out of the leaf. Plays a role for sucrose availability that is essential for plant growth and fiber elongation. This chain is Probable sucrose-phosphate synthase (SPS), found in Solanum tuberosum (Potato).